The sequence spans 127 residues: Large ribosomal subunit protein bL21 (127 aa).

This sequence belongs to the bacterial ribosomal protein bL21 family. Part of the 50S ribosomal subunit. Contacts protein L20.

Its function is as follows. This protein binds to 23S rRNA in the presence of protein L20. The polypeptide is Large ribosomal subunit protein bL21 (Blochmanniella floridana).